The primary structure comprises 399 residues: PCI domain-containing protein 2 (399 aa).

Residues 210–391 enclose the PCI domain; the sequence is VTYKYYVGRK…QKLVVSKQNP (182 aa).

It belongs to the CSN12 family.

The chain is PCI domain-containing protein 2 (pcid2) from Danio rerio (Zebrafish).